Here is a 347-residue protein sequence, read N- to C-terminus: 3-isopropylmalate dehydrogenase (347 aa).

Arg94, Arg104, Arg128, and Asp219 together coordinate substrate. Mg(2+) contacts are provided by Asp219, Asp243, and Asp247. 279 to 291 (GSAPDIAGQGKAD) serves as a coordination point for NAD(+).

This sequence belongs to the isocitrate and isopropylmalate dehydrogenases family. LeuB type 2 subfamily. As to quaternary structure, homodimer. Mg(2+) is required as a cofactor. The cofactor is Mn(2+).

Its subcellular location is the cytoplasm. It catalyses the reaction (2R,3S)-3-isopropylmalate + NAD(+) = 4-methyl-2-oxopentanoate + CO2 + NADH. Its pathway is amino-acid biosynthesis; L-leucine biosynthesis; L-leucine from 3-methyl-2-oxobutanoate: step 3/4. Its function is as follows. Catalyzes the oxidation of 3-carboxy-2-hydroxy-4-methylpentanoate (3-isopropylmalate) to 3-carboxy-4-methyl-2-oxopentanoate. The product decarboxylates to 4-methyl-2 oxopentanoate. This Streptomyces avermitilis (strain ATCC 31267 / DSM 46492 / JCM 5070 / NBRC 14893 / NCIMB 12804 / NRRL 8165 / MA-4680) protein is 3-isopropylmalate dehydrogenase.